The sequence spans 465 residues: Siroheme synthase (465 aa).

Positions 1–203 (MDFLPLFHSL…GRPAEAERLL (203 aa)) are precorrin-2 dehydrogenase /sirohydrochlorin ferrochelatase. Residues 22–23 (EV) and 43–44 (PQ) contribute to the NAD(+) site. Position 128 is a phosphoserine (Ser128). The tract at residues 217-465 (GEVYLVGAGP…AWFEGAREDA (249 aa)) is uroporphyrinogen-III C-methyltransferase. Pro226 is a binding site for S-adenosyl-L-methionine. Asp249 functions as the Proton acceptor in the catalytic mechanism. Lys271 (proton donor) is an active-site residue. S-adenosyl-L-methionine is bound by residues 302 to 304 (GGD), Ile307, 332 to 333 (TA), Met384, and Gly413.

It in the N-terminal section; belongs to the precorrin-2 dehydrogenase / sirohydrochlorin ferrochelatase family. The protein in the C-terminal section; belongs to the precorrin methyltransferase family.

It catalyses the reaction uroporphyrinogen III + 2 S-adenosyl-L-methionine = precorrin-2 + 2 S-adenosyl-L-homocysteine + H(+). It carries out the reaction precorrin-2 + NAD(+) = sirohydrochlorin + NADH + 2 H(+). The catalysed reaction is siroheme + 2 H(+) = sirohydrochlorin + Fe(2+). The protein operates within cofactor biosynthesis; adenosylcobalamin biosynthesis; precorrin-2 from uroporphyrinogen III: step 1/1. Its pathway is cofactor biosynthesis; adenosylcobalamin biosynthesis; sirohydrochlorin from precorrin-2: step 1/1. It functions in the pathway porphyrin-containing compound metabolism; siroheme biosynthesis; precorrin-2 from uroporphyrinogen III: step 1/1. It participates in porphyrin-containing compound metabolism; siroheme biosynthesis; siroheme from sirohydrochlorin: step 1/1. The protein operates within porphyrin-containing compound metabolism; siroheme biosynthesis; sirohydrochlorin from precorrin-2: step 1/1. Multifunctional enzyme that catalyzes the SAM-dependent methylations of uroporphyrinogen III at position C-2 and C-7 to form precorrin-2 via precorrin-1. Then it catalyzes the NAD-dependent ring dehydrogenation of precorrin-2 to yield sirohydrochlorin. Finally, it catalyzes the ferrochelation of sirohydrochlorin to yield siroheme. In Pseudomonas aeruginosa (strain UCBPP-PA14), this protein is Siroheme synthase.